The following is a 412-amino-acid chain: Putative competence-damage inducible protein (412 aa).

Belongs to the CinA family.

This is Putative competence-damage inducible protein from Bacillus mycoides (strain KBAB4) (Bacillus weihenstephanensis).